We begin with the raw amino-acid sequence, 80 residues long: Putative membrane protein insertion efficiency factor (80 aa).

The protein belongs to the UPF0161 family.

The protein localises to the cell inner membrane. Functionally, could be involved in insertion of integral membrane proteins into the membrane. The chain is Putative membrane protein insertion efficiency factor from Syntrophobacter fumaroxidans (strain DSM 10017 / MPOB).